A 138-amino-acid chain; its full sequence is Venom allergen 2 (138 aa).

The N-terminal stretch at 1 to 19 (MKSFVLATCLLGFAQIIYA) is a signal peptide.

Belongs to the ant venom allergen 2/4 family. As to quaternary structure, homodimer; disulfide-linked. In terms of tissue distribution, expressed by the venom gland.

It localises to the secreted. The polypeptide is Venom allergen 2 (Solenopsis saevissima (Fire ant)).